The following is a 782-amino-acid chain: Phosphoribosylformylglycinamidine synthase subunit PurL (782 aa).

The active site involves His-48. ATP is bound by residues Tyr-51 and Lys-90. Position 92 (Glu-92) interacts with Mg(2+). Residues 93-96 (SHNH) and Arg-115 contribute to the substrate site. The Proton acceptor role is filled by His-94. Asp-116 is a Mg(2+) binding site. Gln-239 contributes to the substrate binding site. Asp-267 contacts Mg(2+). 311 to 313 (ESQ) provides a ligand contact to substrate. ATP-binding residues include Asp-525 and Gly-562. Asn-563 contacts Mg(2+). Ser-565 lines the substrate pocket.

It belongs to the FGAMS family. As to quaternary structure, monomer. Part of the FGAM synthase complex composed of 1 PurL, 1 PurQ and 2 PurS subunits.

Its subcellular location is the cytoplasm. The catalysed reaction is N(2)-formyl-N(1)-(5-phospho-beta-D-ribosyl)glycinamide + L-glutamine + ATP + H2O = 2-formamido-N(1)-(5-O-phospho-beta-D-ribosyl)acetamidine + L-glutamate + ADP + phosphate + H(+). It functions in the pathway purine metabolism; IMP biosynthesis via de novo pathway; 5-amino-1-(5-phospho-D-ribosyl)imidazole from N(2)-formyl-N(1)-(5-phospho-D-ribosyl)glycinamide: step 1/2. Its function is as follows. Part of the phosphoribosylformylglycinamidine synthase complex involved in the purines biosynthetic pathway. Catalyzes the ATP-dependent conversion of formylglycinamide ribonucleotide (FGAR) and glutamine to yield formylglycinamidine ribonucleotide (FGAM) and glutamate. The FGAM synthase complex is composed of three subunits. PurQ produces an ammonia molecule by converting glutamine to glutamate. PurL transfers the ammonia molecule to FGAR to form FGAM in an ATP-dependent manner. PurS interacts with PurQ and PurL and is thought to assist in the transfer of the ammonia molecule from PurQ to PurL. This chain is Phosphoribosylformylglycinamidine synthase subunit PurL, found in Nostoc sp. (strain PCC 7120 / SAG 25.82 / UTEX 2576).